The primary structure comprises 148 residues: Large ribosomal subunit protein uL15 (148 aa).

Residues 1–10 are compositionally biased toward basic and acidic residues; sequence MQLHNLEYKK. A disordered region spans residues 1–42; it reads MQLHNLEYKKGSRNHKEKRVGRGHGSGLGKTSGRGQDGQKAR. Basic residues predominate over residues 11-22; sequence GSRNHKEKRVGR. Positions 23–36 are enriched in gly residues; that stretch reads GHGSGLGKTSGRGQ.

The protein belongs to the universal ribosomal protein uL15 family. In terms of assembly, part of the 50S ribosomal subunit.

Functionally, binds to the 23S rRNA. The protein is Large ribosomal subunit protein uL15 of Ureaplasma urealyticum serovar 10 (strain ATCC 33699 / Western).